The chain runs to 155 residues: MSRRGTAEEKTAKSDPIYRNRLVNMLVNRIMKHGKKSLAYQIIYRAVKKIQQKTETNPLSVLRQAIRGVTPDIAVKARRVGGSTHQVPIEIGSTQGKALAIRWLLGASRKRPGRNMAFKLSSELVDAAKGSGDAIRKKEETHRMAEANRAFAHFR.

Belongs to the universal ribosomal protein uS7 family. Part of the 30S ribosomal subunit.

It is found in the plastid. Its subcellular location is the chloroplast. In terms of biological role, one of the primary rRNA binding proteins, it binds directly to 16S rRNA where it nucleates assembly of the head domain of the 30S subunit. The sequence is that of Small ribosomal subunit protein uS7c (rps7) from Typha angustifolia (Narrow leaf cattail).